A 137-amino-acid polypeptide reads, in one-letter code: DNA-directed RNA polymerase subunit omega (137 aa).

A disordered region spans residues 78–137 (DEPEPEAVPLLSSSPAAAAVAPQAASGDDNDIQFDRMSEEDLLRGLENLAPPTETEDEGD). Residues 84 to 103 (AVPLLSSSPAAAAVAPQAAS) show a composition bias toward low complexity. Basic and acidic residues predominate over residues 110-121 (QFDRMSEEDLLR).

It belongs to the RNA polymerase subunit omega family. As to quaternary structure, the RNAP catalytic core consists of 2 alpha, 1 beta, 1 beta' and 1 omega subunit. When a sigma factor is associated with the core the holoenzyme is formed, which can initiate transcription.

The enzyme catalyses RNA(n) + a ribonucleoside 5'-triphosphate = RNA(n+1) + diphosphate. Its function is as follows. Promotes RNA polymerase assembly. Latches the N- and C-terminal regions of the beta' subunit thereby facilitating its interaction with the beta and alpha subunits. The polypeptide is DNA-directed RNA polymerase subunit omega (Methylobacterium sp. (strain 4-46)).